Reading from the N-terminus, the 387-residue chain is MNIHEYQAKAIFADNGIPTLKGKVAFSVDEAVSNAKELGGSVWAVKAQIHAGGRGLGGGVKIAKNLDEVKDYASKILGMNLATHQTGPEGKLVQKLYIESGANIVKEYYLAILFNRMAEQITIIASSEGGMDIEKVAKESPEKIAKVGIDPQIGFKMFHGLEVARVLGLDKDEGKKLISMIAKLYKLYMDKDMNMLEINPLIKTAEGDFYALDAKCSFDDSALYRHPEIAELRDITEENPAEREAAEFGLSYVKLDGDVACMVNGAGLAMATMDIINYSGAKPANFLDVGGGASPETVAKAFEIILRDKNVKVIFINIFGGIVRCDRIANGILEATKNVEVNIPIVVRLDGTNAAEAKTILDNSNLKNIKAATNLKNGAELVKSLVG.

The ATP-grasp domain occupies 9–244 (KAIFADNGIP…ITEENPAERE (236 aa)). Residues lysine 46, 53–55 (GRG), glutamate 99, alanine 102, and glutamate 107 contribute to the ATP site. Mg(2+)-binding residues include asparagine 199 and aspartate 213. Substrate contacts are provided by residues asparagine 264 and 321 to 323 (GIV).

The protein belongs to the succinate/malate CoA ligase beta subunit family. As to quaternary structure, heterotetramer of two alpha and two beta subunits. Mg(2+) is required as a cofactor.

The catalysed reaction is succinate + ATP + CoA = succinyl-CoA + ADP + phosphate. The enzyme catalyses GTP + succinate + CoA = succinyl-CoA + GDP + phosphate. Its pathway is carbohydrate metabolism; tricarboxylic acid cycle; succinate from succinyl-CoA (ligase route): step 1/1. Its function is as follows. Succinyl-CoA synthetase functions in the citric acid cycle (TCA), coupling the hydrolysis of succinyl-CoA to the synthesis of either ATP or GTP and thus represents the only step of substrate-level phosphorylation in the TCA. The beta subunit provides nucleotide specificity of the enzyme and binds the substrate succinate, while the binding sites for coenzyme A and phosphate are found in the alpha subunit. This is Succinate--CoA ligase [ADP-forming] subunit beta from Campylobacter jejuni subsp. jejuni serotype O:6 (strain 81116 / NCTC 11828).